Here is a 242-residue protein sequence, read N- to C-terminus: Myogenic factor 6 (242 aa).

Residues 30–63 are disordered; sequence GSPLYPGSDGTLSPCQDQLPPEAGSDSSGEEHVL. One can recognise a bHLH domain in the interval 93-144; it reads DRRKAATLRERRRLKKINEAFEALKRRTVANPNQRLPKVEILRSAISYIERL. Positions 190-210 are disordered; the sequence is ASDHSRALGGSPKAGGSMVES.

In terms of assembly, efficient DNA binding requires dimerization with another bHLH protein. Skeletal muscle.

Its subcellular location is the nucleus. Functionally, involved in muscle differentiation (myogenic factor). Induces fibroblasts to differentiate into myoblasts. Probable sequence specific DNA-binding protein. The sequence is that of Myogenic factor 6 (MYF6) from Gallus gallus (Chicken).